We begin with the raw amino-acid sequence, 156 residues long: Small ribosomal subunit protein uS7 (156 aa).

This sequence belongs to the universal ribosomal protein uS7 family. As to quaternary structure, part of the 30S ribosomal subunit. Contacts proteins S9 and S11.

Functionally, one of the primary rRNA binding proteins, it binds directly to 16S rRNA where it nucleates assembly of the head domain of the 30S subunit. Is located at the subunit interface close to the decoding center, probably blocks exit of the E-site tRNA. The sequence is that of Small ribosomal subunit protein uS7 from Leptothrix cholodnii (strain ATCC 51168 / LMG 8142 / SP-6) (Leptothrix discophora (strain SP-6)).